The following is a 668-amino-acid chain: Phosphoglycerate transport system sensor protein PgtB (668 aa).

A run of 2 helical transmembrane segments spans residues 20-40 and 342-362; these read GAFLTGALLTLIVSMVSLYSW and LILVATLLALLLAWGLNHYFI. Residues 364-416 form the HAMP domain; it reads SRLVKRFTALNQAVVQIGLGRTDSTIPVYGRDELGRIARLLRHTLGQLNMQRR. The Histidine kinase domain occupies 454–663; sequence TLAHEINQPL…CVVLQFSVTD (210 aa). H457 is modified (phosphohistidine; by autocatalysis).

It localises to the cell inner membrane. The enzyme catalyses ATP + protein L-histidine = ADP + protein N-phospho-L-histidine.. In terms of biological role, member of the two-component regulatory system PgtB/PgtA that regulates the inducible phosphoglycerate transport system. Activates PgtA by phosphorylation. This is Phosphoglycerate transport system sensor protein PgtB (pgtB) from Salmonella typhimurium (strain LT2 / SGSC1412 / ATCC 700720).